The chain runs to 673 residues: UvrABC system protein B (673 aa).

A Helicase ATP-binding domain is found at 26 to 183; that stretch reads EGLEDGLAHQ…RRLAELQYTR (158 aa). Position 39 to 46 (39 to 46) interacts with ATP; the sequence is GVTGSGKT. Positions 92–115 match the Beta-hairpin motif; sequence YYDYYQPEAYVPSSDTFIEKDASV. Residues 431–597 form the Helicase C-terminal domain; sequence QVDDLLSEIR…GLNKKVVDIL (167 aa). The 36-residue stretch at 633–668 folds into the UVR domain; that stretch reads QQKIHELEGQMMQHAQNLEFEEAAQIRDQLHQLREL.

It belongs to the UvrB family. In terms of assembly, forms a heterotetramer with UvrA during the search for lesions. Interacts with UvrC in an incision complex.

It localises to the cytoplasm. In terms of biological role, the UvrABC repair system catalyzes the recognition and processing of DNA lesions. A damage recognition complex composed of 2 UvrA and 2 UvrB subunits scans DNA for abnormalities. Upon binding of the UvrA(2)B(2) complex to a putative damaged site, the DNA wraps around one UvrB monomer. DNA wrap is dependent on ATP binding by UvrB and probably causes local melting of the DNA helix, facilitating insertion of UvrB beta-hairpin between the DNA strands. Then UvrB probes one DNA strand for the presence of a lesion. If a lesion is found the UvrA subunits dissociate and the UvrB-DNA preincision complex is formed. This complex is subsequently bound by UvrC and the second UvrB is released. If no lesion is found, the DNA wraps around the other UvrB subunit that will check the other stand for damage. This is UvrABC system protein B from Salmonella heidelberg (strain SL476).